A 312-amino-acid polypeptide reads, in one-letter code: Holliday junction branch migration complex subunit RuvB (312 aa).

The interval Met-1–Tyr-168 is large ATPase domain (RuvB-L). ATP contacts are provided by residues Arg-8, Gly-49, Lys-52, Thr-53, Thr-54, Glu-115 to Phe-117, Arg-158, Tyr-168, and Arg-206. Thr-53 contacts Mg(2+). The interval Glu-169 to Gln-234 is small ATPAse domain (RuvB-S). The interval Asp-237–Lys-312 is head domain (RuvB-H). Lys-290 and Arg-295 together coordinate DNA.

This sequence belongs to the RuvB family. Homohexamer. Forms an RuvA(8)-RuvB(12)-Holliday junction (HJ) complex. HJ DNA is sandwiched between 2 RuvA tetramers; dsDNA enters through RuvA and exits via RuvB. An RuvB hexamer assembles on each DNA strand where it exits the tetramer. Each RuvB hexamer is contacted by two RuvA subunits (via domain III) on 2 adjacent RuvB subunits; this complex drives branch migration. In the full resolvosome a probable DNA-RuvA(4)-RuvB(12)-RuvC(2) complex forms which resolves the HJ.

It localises to the cytoplasm. The catalysed reaction is ATP + H2O = ADP + phosphate + H(+). Functionally, the RuvA-RuvB-RuvC complex processes Holliday junction (HJ) DNA during genetic recombination and DNA repair, while the RuvA-RuvB complex plays an important role in the rescue of blocked DNA replication forks via replication fork reversal (RFR). RuvA specifically binds to HJ cruciform DNA, conferring on it an open structure. The RuvB hexamer acts as an ATP-dependent pump, pulling dsDNA into and through the RuvAB complex. RuvB forms 2 homohexamers on either side of HJ DNA bound by 1 or 2 RuvA tetramers; 4 subunits per hexamer contact DNA at a time. Coordinated motions by a converter formed by DNA-disengaged RuvB subunits stimulates ATP hydrolysis and nucleotide exchange. Immobilization of the converter enables RuvB to convert the ATP-contained energy into a lever motion, pulling 2 nucleotides of DNA out of the RuvA tetramer per ATP hydrolyzed, thus driving DNA branch migration. The RuvB motors rotate together with the DNA substrate, which together with the progressing nucleotide cycle form the mechanistic basis for DNA recombination by continuous HJ branch migration. Branch migration allows RuvC to scan DNA until it finds its consensus sequence, where it cleaves and resolves cruciform DNA. The polypeptide is Holliday junction branch migration complex subunit RuvB (Ureaplasma urealyticum serovar 10 (strain ATCC 33699 / Western)).